Here is a 351-residue protein sequence, read N- to C-terminus: ABC transporter nucleoside-binding protein BmpA (351 aa).

The first 21 residues, 1–21 (MKKRVIAVSAIALASVAVLAG), serve as a signal peptide directing secretion. C22 carries N-palmitoyl cysteine lipidation. C22 is lipidated: S-diacylglycerol cysteine.

This sequence belongs to the BMP lipoprotein family. As to quaternary structure, the complex is composed of two ATP-binding proteins (NupA), two transmembrane proteins (NupB and NupC) and a solute-binding protein (BmpA).

The protein localises to the cell membrane. Part of an ABC transporter complex involved in the uptake of all common nucleosides. The chain is ABC transporter nucleoside-binding protein BmpA from Lactococcus lactis subsp. cremoris (strain MG1363).